The chain runs to 312 residues: Tyrosine recombinase XerC (312 aa).

Positions 1 to 103 (MISAFYAFLD…AIKSFSQYCI (103 aa)) constitute a Core-binding (CB) domain. The Tyr recombinase domain maps to 124 to 306 (ELPSPITYEQ…SMKLKKQTHE (183 aa)). Active-site residues include arginine 164, lysine 188, histidine 258, arginine 261, and histidine 284. Tyrosine 293 (O-(3'-phospho-DNA)-tyrosine intermediate) is an active-site residue.

The protein belongs to the 'phage' integrase family. XerC subfamily. Forms a cyclic heterotetrameric complex composed of two molecules of XerC and two molecules of XerD.

It localises to the cytoplasm. Its function is as follows. Site-specific tyrosine recombinase, which acts by catalyzing the cutting and rejoining of the recombining DNA molecules. The XerC-XerD complex is essential to convert dimers of the bacterial chromosome into monomers to permit their segregation at cell division. It also contributes to the segregational stability of plasmids. This Chlamydia caviae (strain ATCC VR-813 / DSM 19441 / 03DC25 / GPIC) (Chlamydophila caviae) protein is Tyrosine recombinase XerC.